A 667-amino-acid chain; its full sequence is Putative L-type lectin-domain containing receptor kinase I.4 (667 aa).

The signal sequence occupies residues 1-21 (MDCRLHLVLFFSCVCLICLSG). Over 22 to 294 (QQETGFVYNG…PREEKKKLHP (273 aa)) the chain is Extracellular. Residues 24-257 (ETGFVYNGFH…NQYILGWSFS (234 aa)) form a legume-lectin like region. Asn55, Asn110, Asn124, Asn128, Asn181, Asn204, and Asn225 each carry an N-linked (GlcNAc...) asparagine glycan. Residues 295 to 315 (LLIGLVILLVIPVLMVLGGVY) traverse the membrane as a helical segment. Residues 316-667 (WYRRKKYAEV…THSILEGYGR (352 aa)) are Cytoplasmic-facing. The Protein kinase domain maps to 350–625 (FVKDALVGKG…QYLSQKQPLP (276 aa)). ATP contacts are provided by residues 356–364 (VGKGGFGKV) and Lys378. Asp474 acts as the Proton acceptor in catalysis.

This sequence in the C-terminal section; belongs to the protein kinase superfamily. Ser/Thr protein kinase family. The protein in the N-terminal section; belongs to the leguminous lectin family.

The protein localises to the cell membrane. It carries out the reaction L-seryl-[protein] + ATP = O-phospho-L-seryl-[protein] + ADP + H(+). The catalysed reaction is L-threonyl-[protein] + ATP = O-phospho-L-threonyl-[protein] + ADP + H(+). The polypeptide is Putative L-type lectin-domain containing receptor kinase I.4 (LECRK14) (Arabidopsis thaliana (Mouse-ear cress)).